The following is a 283-amino-acid chain: Pantothenate synthetase (283 aa).

30 to 37 lines the ATP pocket; the sequence is MGNLHAGH. Catalysis depends on H37, which acts as the Proton donor. Q61 is a (R)-pantoate binding site. Q61 contacts beta-alanine. 149–152 is an ATP binding site; that stretch reads GRKD. Residue Q155 coordinates (R)-pantoate. 186 to 189 contacts ATP; that stretch reads LSSR.

Belongs to the pantothenate synthetase family. Homodimer.

It localises to the cytoplasm. It catalyses the reaction (R)-pantoate + beta-alanine + ATP = (R)-pantothenate + AMP + diphosphate + H(+). It functions in the pathway cofactor biosynthesis; (R)-pantothenate biosynthesis; (R)-pantothenate from (R)-pantoate and beta-alanine: step 1/1. Its function is as follows. Catalyzes the condensation of pantoate with beta-alanine in an ATP-dependent reaction via a pantoyl-adenylate intermediate. This Chromohalobacter salexigens (strain ATCC BAA-138 / DSM 3043 / CIP 106854 / NCIMB 13768 / 1H11) protein is Pantothenate synthetase.